Reading from the N-terminus, the 337-residue chain is Glycerol-3-phosphate dehydrogenase [NAD(P)+] (337 aa).

Serine 11, tryptophan 12, arginine 32, and lysine 109 together coordinate NADPH. Sn-glycerol 3-phosphate is bound by residues lysine 109, glycine 140, and serine 142. Alanine 144 serves as a coordination point for NADPH. Residues lysine 195, aspartate 248, serine 258, arginine 259, and asparagine 260 each contribute to the sn-glycerol 3-phosphate site. Lysine 195 acts as the Proton acceptor in catalysis. Residue arginine 259 coordinates NADPH. Residues valine 283 and glutamate 285 each coordinate NADPH.

Belongs to the NAD-dependent glycerol-3-phosphate dehydrogenase family.

The protein resides in the cytoplasm. The catalysed reaction is sn-glycerol 3-phosphate + NAD(+) = dihydroxyacetone phosphate + NADH + H(+). The enzyme catalyses sn-glycerol 3-phosphate + NADP(+) = dihydroxyacetone phosphate + NADPH + H(+). Its pathway is membrane lipid metabolism; glycerophospholipid metabolism. Its function is as follows. Catalyzes the reduction of the glycolytic intermediate dihydroxyacetone phosphate (DHAP) to sn-glycerol 3-phosphate (G3P), the key precursor for phospholipid synthesis. This Limosilactobacillus fermentum (strain NBRC 3956 / LMG 18251) (Lactobacillus fermentum) protein is Glycerol-3-phosphate dehydrogenase [NAD(P)+].